Consider the following 182-residue polypeptide: Transcription termination/antitermination protein NusG (182 aa).

One can recognise a KOW domain in the interval 131 to 161 (GEVVRVNDGPFADFNGTVEEVDYEKSRLKVS).

Belongs to the NusG family.

Participates in transcription elongation, termination and antitermination. This is Transcription termination/antitermination protein NusG from Vibrio cholerae serotype O1 (strain ATCC 39315 / El Tor Inaba N16961).